Consider the following 214-residue polypeptide: Oocyte zinc finger protein XlCOF10 (214 aa).

7 C2H2-type zinc fingers span residues 1 to 23 (FSCS…RQLH), 29 to 51 (FTCS…HRIH), 57 to 79 (FTCD…QKSH), 85 to 107 (FCCS…QRTH), 113 to 135 (FTCT…QKSH), 141 to 163 (FSCS…QRIH), and 169 to 191 (FSCS…EKCH).

It belongs to the krueppel C2H2-type zinc-finger protein family.

Its subcellular location is the nucleus. Its function is as follows. May be involved in transcriptional regulation. The protein is Oocyte zinc finger protein XlCOF10 of Xenopus laevis (African clawed frog).